The following is a 93-amino-acid chain: Small ribosomal subunit protein bS20 (93 aa).

This sequence belongs to the bacterial ribosomal protein bS20 family.

Functionally, binds directly to 16S ribosomal RNA. In Dictyoglomus thermophilum (strain ATCC 35947 / DSM 3960 / H-6-12), this protein is Small ribosomal subunit protein bS20.